Consider the following 409-residue polypeptide: MKEKVVLAYSGGLDTSVILKWLCEKGFDVIAYVANVGQKDDFDAIKEKALKTGASKVYVEDLRREFVTDYIFTALLGNAMYEGRYLLGTAIARPLIAKRQVEIAEKEGAQYVAHGATGKGNDQVRFELTYAALNPNLKVISPWKDPEFLAKFKGRTDLINYAMEKGIPIKVSKKRPYSEDENLMHISHEAGKLEDPAYIPDEDVFTWTVSPKDAPDEETLLEIHFENGIPVKVVNLKDGTEKTDPLELFEYLNEVGAKNGVGRLDMVENRFIGIKSRGVYETPGATILWIAHRDLEGITMDKEVMHLRDMLAPKFAELIYNGFWFSPEMEFLLAAFRKAQENVTGKVTVSIYKGNVMPVARYSPYSLYNPELSSMDVEGGFNATDSKGFINIHALRLKVHQLVKKGYQK.

ATP-binding positions include 8–16 (AYSGGLDTS) and alanine 34. Tyrosine 85 is a binding site for L-citrulline. Glycine 115 contacts ATP. L-aspartate is bound by residues threonine 117, asparagine 121, and aspartate 122. Asparagine 121 provides a ligand contact to L-citrulline. Residues arginine 125, serine 178, serine 187, glutamate 268, and tyrosine 280 each contribute to the L-citrulline site.

This sequence belongs to the argininosuccinate synthase family. Type 1 subfamily. In terms of assembly, homotetramer.

It is found in the cytoplasm. The enzyme catalyses L-citrulline + L-aspartate + ATP = 2-(N(omega)-L-arginino)succinate + AMP + diphosphate + H(+). The protein operates within amino-acid biosynthesis; L-arginine biosynthesis; L-arginine from L-ornithine and carbamoyl phosphate: step 2/3. The sequence is that of Argininosuccinate synthase from Thermotoga petrophila (strain ATCC BAA-488 / DSM 13995 / JCM 10881 / RKU-1).